A 78-amino-acid chain; its full sequence is Small ribosomal subunit protein eS21 (78 aa).

Belongs to the eukaryotic ribosomal protein eS21 family.

This chain is Small ribosomal subunit protein eS21 (rps21), found in Dictyostelium discoideum (Social amoeba).